A 334-amino-acid chain; its full sequence is MEIDNQNINNINNNNIHNNINNNNINKRNIENNINNINNINNNISMKNKNNNIDNKKNSNNNNNNNNNNNNKNSISNNNNNNNKSFGLYSLEQPAPLPLWLLVIVFGVSISVIVFLFLNFPSLSPQHKQLIRLPKNFKDVKLLSDILSQYTDDNYFIVITTFGVIYTFLQAFSIPGSVFLSFLSGGLFGLKVGFPLVCFVATLGATFSYLISYYIGRNLVRKLFPDKLKLFSDSLSQKRDNLLNYIVFLRITPFLPNWFINLASPLLDVPIHTFAIGTFIGIMPATFLAVKAGIQIQNIQNPSDIFDLKSILTMAALALLSILPTLIQKKLKVN.

An N-linked (GlcNAc...) asparagine glycan is attached at asparagine 43. The segment at 47–79 (KNKNNNIDNKKNSNNNNNNNNNNNNKNSISNNN) is disordered. A glycan (N-linked (GlcNAc...) asparagine) is linked at asparagine 83. A run of 6 helical transmembrane segments spans residues 97 to 117 (LPLW…VFLF), 156 to 176 (FIVI…SIPG), 192 to 214 (VGFP…ISYY), 246 to 266 (IVFL…ASPL), 269 to 289 (VPIH…TFLA), and 305 to 325 (IFDL…ILPT).

It belongs to the TMEM41 family.

The protein localises to the membrane. The sequence is that of Transmembrane protein 41 homolog from Dictyostelium discoideum (Social amoeba).